The following is a 191-amino-acid chain: MNHEEQKVETMEQVEAQPVEPTDVDSEVTAEQARIAELEAQLEAAQLASNEERERAIRAVAEMENLRRRAAQDVEKAHKFALEKFAAELLPVLDNLERAIELADKESEELKPMIEGVELTLKSMQSGVAKFGLNPLDPLNQPFDPNAHQAMSMIENGELAPNTVIAVMQKGYELNGRVIRPAMVMVSKAPA.

Residues 1 to 10 are compositionally biased toward basic and acidic residues; the sequence is MNHEEQKVET. The interval 1–28 is disordered; it reads MNHEEQKVETMEQVEAQPVEPTDVDSEV.

This sequence belongs to the GrpE family. In terms of assembly, homodimer.

The protein resides in the cytoplasm. Participates actively in the response to hyperosmotic and heat shock by preventing the aggregation of stress-denatured proteins, in association with DnaK and GrpE. It is the nucleotide exchange factor for DnaK and may function as a thermosensor. Unfolded proteins bind initially to DnaJ; upon interaction with the DnaJ-bound protein, DnaK hydrolyzes its bound ATP, resulting in the formation of a stable complex. GrpE releases ADP from DnaK; ATP binding to DnaK triggers the release of the substrate protein, thus completing the reaction cycle. Several rounds of ATP-dependent interactions between DnaJ, DnaK and GrpE are required for fully efficient folding. The chain is Protein GrpE from Aeromonas salmonicida (strain A449).